The chain runs to 61 residues: Photosystem II reaction center protein Z (61 aa).

The next 2 membrane-spanning stretches (helical) occupy residues 5–25 (LTAL…VALA) and 38–58 (NKAF…DGIS).

This sequence belongs to the PsbZ family. In terms of assembly, PSII is composed of 1 copy each of membrane proteins PsbA, PsbB, PsbC, PsbD, PsbE, PsbF, PsbH, PsbI, PsbJ, PsbK, PsbL, PsbM, PsbT, PsbX, PsbY, PsbZ, Psb30/Ycf12, at least 3 peripheral proteins of the oxygen-evolving complex and a large number of cofactors. It forms dimeric complexes.

The protein localises to the plastid. It localises to the chloroplast thylakoid membrane. Its function is as follows. May control the interaction of photosystem II (PSII) cores with the light-harvesting antenna, regulates electron flow through the 2 photosystem reaction centers. PSII is a light-driven water plastoquinone oxidoreductase, using light energy to abstract electrons from H(2)O, generating a proton gradient subsequently used for ATP formation. The polypeptide is Photosystem II reaction center protein Z (Skeletonema costatum (Marine centric diatom)).